A 299-amino-acid polypeptide reads, in one-letter code: Probable inactive heme oxygenase 2, chloroplastic (299 aa).

The span at 1-15 (MASLLRPTPLLSTPR) shows a compositional bias: low complexity. 3 disordered regions span residues 1 to 20 (MASL…LTHS), 45 to 70 (LCRS…KQYP), and 96 to 126 (DLSE…EETW). Residues 1–83 (MASLLRPTPL…IGITEEMRFV (83 aa)) constitute a chloroplast transit peptide. Positions 46–57 (CRSTPTPSQQKA) are enriched in polar residues. The span at 58–67 (SQRKRTRYRK) shows a compositional bias: basic residues. A compositionally biased stretch (acidic residues) spans 105–122 (EKEEEEEEEDDDDDDEVK).

The protein belongs to the heme oxygenase family. Widely expressed at low levels.

It localises to the plastid. It is found in the chloroplast. In terms of biological role, probable inactive heme oxygenase. Binds protoporphyrin IX, a precursor for both heme and chlorophyll biosynthesis. Plays a minor role in phytochrome assembly and photomorphogenesis. The polypeptide is Probable inactive heme oxygenase 2, chloroplastic (HO2) (Arabidopsis thaliana (Mouse-ear cress)).